Consider the following 1029-residue polypeptide: Huntingtin-interacting protein 1 (1029 aa).

The ENTH domain maps to E32–P160. Phosphoserine is present on S338. Positions H375–E636 form a coiled coil. Residues S410–E491 form a pDED region. The I/LWEQ domain maps to G763 to A1004. An important for actin binding region spans residues R859–K916. The segment at G1009–E1029 is disordered.

Belongs to the SLA2 family. As to quaternary structure, homodimer. Binds actin. Binds HTT (via N-terminus). This interaction is restricted to the brain. Binds to IFT57. In normal conditions, it poorly interacts with IFT57, HIP1 being strongly associated with HTT. However, in mutant HTT proteins with a long poly-Gln region, interaction between HTT and HIP1 is inhibited, promoting the interaction between HIP1 and IFT57. Interacts with CLTB (via N-terminus). Interacts (via coiled coil domain) with AR. Interacts with AP2A1, AP2A2, CLTC and HIP1R. Interacts with GRIA1, GRIN2A and GRIN2B. Most abundantly expressed in brain. In brain, expressed in cortical tissue, hippocampus, the molecular layer of the cerebellum and olfactory bulb. Also expressed in spinal cord and bone marrow (at protein level). Expressed in reproductive tissues.

It localises to the cytoplasm. Its subcellular location is the nucleus. The protein resides in the endomembrane system. The protein localises to the cytoplasmic vesicle. It is found in the clathrin-coated vesicle membrane. In terms of biological role, plays a role in clathrin-mediated endocytosis and trafficking. Involved in regulating AMPA receptor trafficking in the central nervous system in an NMDA-dependent manner. Regulates presynaptic nerve terminal activity. Enhances androgen receptor (AR)-mediated transcription. May act as a proapoptotic protein that induces cell death by acting through the intrinsic apoptosis pathway. Binds 3-phosphoinositides (via ENTH domain). May act through the ENTH domain to promote cell survival by stabilizing receptor tyrosine kinases following ligand-induced endocytosis. May play a functional role in the cell filament networks. May be required for differentiation, proliferation, and/or survival of somatic and germline progenitors. This chain is Huntingtin-interacting protein 1, found in Mus musculus (Mouse).